Here is a 401-residue protein sequence, read N- to C-terminus: Argininosuccinate synthase (401 aa).

9-17 (AYSGGLDTS) serves as a coordination point for ATP. Residue tyrosine 88 participates in L-citrulline binding. Position 118 (glycine 118) interacts with ATP. Residues threonine 120, asparagine 124, and aspartate 125 each coordinate L-aspartate. Asparagine 124 lines the L-citrulline pocket. Positions 128, 177, 186, 262, and 274 each coordinate L-citrulline.

It belongs to the argininosuccinate synthase family. Type 1 subfamily. As to quaternary structure, homotetramer.

It localises to the cytoplasm. The enzyme catalyses L-citrulline + L-aspartate + ATP = 2-(N(omega)-L-arginino)succinate + AMP + diphosphate + H(+). Its pathway is amino-acid biosynthesis; L-arginine biosynthesis; L-arginine from L-ornithine and carbamoyl phosphate: step 2/3. The chain is Argininosuccinate synthase from Chlorobaculum parvum (strain DSM 263 / NCIMB 8327) (Chlorobium vibrioforme subsp. thiosulfatophilum).